Here is a 219-residue protein sequence, read N- to C-terminus: NAD(P)H-quinone oxidoreductase subunit I (219 aa).

2 consecutive 4Fe-4S ferredoxin-type domains span residues 55–84 and 95–124; these read GRIH…VDWV and RNYS…MTEE. [4Fe-4S] cluster-binding residues include C64, C67, C70, C74, C104, C107, C110, and C114. The interval 192–219 is disordered; it reads LKAAGSMKAAEDERESSSSASNMEESAG. Residues 208–219 are compositionally biased toward low complexity; sequence SSSASNMEESAG.

Belongs to the complex I 23 kDa subunit family. NDH-1 is composed of at least 11 different subunits. The cofactor is [4Fe-4S] cluster.

It is found in the cellular thylakoid membrane. It catalyses the reaction a plastoquinone + NADH + (n+1) H(+)(in) = a plastoquinol + NAD(+) + n H(+)(out). The catalysed reaction is a plastoquinone + NADPH + (n+1) H(+)(in) = a plastoquinol + NADP(+) + n H(+)(out). In terms of biological role, NDH-1 shuttles electrons from an unknown electron donor, via FMN and iron-sulfur (Fe-S) centers, to quinones in the respiratory and/or the photosynthetic chain. The immediate electron acceptor for the enzyme in this species is believed to be plastoquinone. Couples the redox reaction to proton translocation, and thus conserves the redox energy in a proton gradient. This Synechococcus sp. (strain CC9311) protein is NAD(P)H-quinone oxidoreductase subunit I.